The chain runs to 406 residues: Leucine aminopeptidase 1 (406 aa).

An N-terminal signal peptide occupies residues 1-18; sequence MKVTNASLLALLLPAVSG. Residues 19–94 constitute a propeptide that is removed on maturation; that stretch reads RFVETGEPDR…LRAMTASRKK (76 aa). N-linked (GlcNAc...) asparagine glycosylation is present at asparagine 186. 4 residues coordinate Zn(2+): histidine 194, aspartate 213, glutamate 252, and aspartate 279. Asparagine 306 is a glycosylation site (N-linked (GlcNAc...) asparagine). A disulfide bond links cysteine 328 and cysteine 332. Residue histidine 361 coordinates Zn(2+).

It belongs to the peptidase M28 family. M28E subfamily. In terms of assembly, monomer. Zn(2+) serves as cofactor.

The protein localises to the secreted. Functionally, extracellular aminopeptidase that allows assimilation of proteinaceous substrates. This Chaetomium globosum (strain ATCC 6205 / CBS 148.51 / DSM 1962 / NBRC 6347 / NRRL 1970) (Soil fungus) protein is Leucine aminopeptidase 1 (LAP1).